Here is a 162-residue protein sequence, read N- to C-terminus: Transcription antitermination protein NusB (162 aa).

Belongs to the NusB family.

Its function is as follows. Involved in transcription antitermination. Required for transcription of ribosomal RNA (rRNA) genes. Binds specifically to the boxA antiterminator sequence of the ribosomal RNA (rrn) operons. The chain is Transcription antitermination protein NusB from Xanthomonas euvesicatoria pv. vesicatoria (strain 85-10) (Xanthomonas campestris pv. vesicatoria).